A 186-amino-acid polypeptide reads, in one-letter code: Threonylcarbamoyl-AMP synthase (186 aa).

The YrdC-like domain maps to 1–186 (MADTWEAAHS…LNNQVFRDDA (186 aa)).

The protein belongs to the SUA5 family. TsaC subfamily.

The protein localises to the cytoplasm. The enzyme catalyses L-threonine + hydrogencarbonate + ATP = L-threonylcarbamoyladenylate + diphosphate + H2O. In terms of biological role, required for the formation of a threonylcarbamoyl group on adenosine at position 37 (t(6)A37) in tRNAs that read codons beginning with adenine. Catalyzes the conversion of L-threonine, HCO(3)(-)/CO(2) and ATP to give threonylcarbamoyl-AMP (TC-AMP) as the acyladenylate intermediate, with the release of diphosphate. The sequence is that of Threonylcarbamoyl-AMP synthase from Idiomarina loihiensis (strain ATCC BAA-735 / DSM 15497 / L2-TR).